We begin with the raw amino-acid sequence, 370 residues long: 4-hydroxy-3-methylbut-2-en-1-yl diphosphate synthase (flavodoxin) (370 aa).

[4Fe-4S] cluster contacts are provided by Cys271, Cys274, Cys306, and Glu313.

Belongs to the IspG family. Requires [4Fe-4S] cluster as cofactor.

It carries out the reaction (2E)-4-hydroxy-3-methylbut-2-enyl diphosphate + oxidized [flavodoxin] + H2O + 2 H(+) = 2-C-methyl-D-erythritol 2,4-cyclic diphosphate + reduced [flavodoxin]. It participates in isoprenoid biosynthesis; isopentenyl diphosphate biosynthesis via DXP pathway; isopentenyl diphosphate from 1-deoxy-D-xylulose 5-phosphate: step 5/6. Functionally, converts 2C-methyl-D-erythritol 2,4-cyclodiphosphate (ME-2,4cPP) into 1-hydroxy-2-methyl-2-(E)-butenyl 4-diphosphate. In Actinobacillus pleuropneumoniae serotype 5b (strain L20), this protein is 4-hydroxy-3-methylbut-2-en-1-yl diphosphate synthase (flavodoxin).